The chain runs to 135 residues: Cytochrome b5 (135 aa).

Residues 4–80 (SKVYSLAEVS…MDEMCVGDID (77 aa)) form the Cytochrome b5 heme-binding domain. Heme contacts are provided by His-39 and His-63. The chain crosses the membrane as a helical span at residues 106–126 (FIIKLLQFLVPLIILGVAVGI).

Belongs to the cytochrome b5 family.

The protein localises to the endoplasmic reticulum membrane. The protein resides in the microsome membrane. Functionally, membrane bound hemoprotein which function as an electron carrier for several membrane bound oxygenases. The protein is Cytochrome b5 of Cuscuta reflexa (Southern Asian dodder).